Consider the following 749-residue polypeptide: Transcription factor RFX3 (749 aa).

The RFX-type winged-helix DNA-binding region spans 183–258 (HLQWLLDNYE…YHYYGIRVKP (76 aa)). Positions 663–699 (VSPGNLDKDEGSEVESEMDEELDDSSEPQAKREKTEL) are disordered. Positions 674–688 (SEVESEMDEELDDSS) are enriched in acidic residues.

It belongs to the RFX family. As to quaternary structure, heterodimer; heterodimerizes with RFX1 and RFX2, and RFX6.

Its subcellular location is the nucleus. Its function is as follows. Transcription factor required for ciliogenesis and islet cell differentiation during endocrine pancreas development. Essential for the differentiation of nodal monocilia and left-right asymmetry specification during embryogenesis. Required for the biogenesis of motile cilia by governing growth and beating efficiency of motile cells. Also required for ciliated ependymal cell differentiation. Regulates the expression of genes involved in ciliary assembly (DYNC2LI1, FOXJ1 and BBS4) and genes involved in ciliary motility (DNAH11, DNAH9 and DNAH5). Together with RFX6, participates in the differentiation of 4 of the 5 islet cell types during endocrine pancreas development, with the exception of pancreatic PP (polypeptide-producing) cells. Regulates transcription by forming a heterodimer with another RFX protein and binding to the X-box in the promoter of target genes. Represses transcription of MAP1A in non-neuronal cells but not in neuronal cells. In Homo sapiens (Human), this protein is Transcription factor RFX3 (RFX3).